Consider the following 297-residue polypeptide: N-acetylneuraminate lyase (297 aa).

The aceneuramate site is built by Ser47 and Thr48. Catalysis depends on Tyr137, which acts as the Proton donor. Lys165 functions as the Schiff-base intermediate with substrate in the catalytic mechanism. Aceneuramate-binding residues include Thr167, Gly189, Asp191, Glu192, and Ser208.

It belongs to the DapA family. NanA subfamily. As to quaternary structure, homotetramer.

The protein resides in the cytoplasm. It carries out the reaction aceneuramate = aldehydo-N-acetyl-D-mannosamine + pyruvate. It functions in the pathway amino-sugar metabolism; N-acetylneuraminate degradation; D-fructose 6-phosphate from N-acetylneuraminate: step 1/5. Catalyzes the reversible aldol cleavage of N-acetylneuraminic acid (sialic acid; Neu5Ac) to form pyruvate and N-acetylmannosamine (ManNAc) via a Schiff base intermediate. The sequence is that of N-acetylneuraminate lyase from Enterobacter sp. (strain 638).